We begin with the raw amino-acid sequence, 212 residues long: tRNA (guanine-N(7)-)-methyltransferase (212 aa).

Residues Glu-44, Asp-69, Asp-96, and Asp-118 each contribute to the S-adenosyl-L-methionine site. Asp-118 is a catalytic residue. Residue Lys-122 participates in substrate binding. The interval 124 to 129 is interaction with RNA; the sequence is RHEKRR. Residues Asp-154 and 191–194 each bind substrate; that span reads TEYE.

It belongs to the class I-like SAM-binding methyltransferase superfamily. TrmB family.

It catalyses the reaction guanosine(46) in tRNA + S-adenosyl-L-methionine = N(7)-methylguanosine(46) in tRNA + S-adenosyl-L-homocysteine. It participates in tRNA modification; N(7)-methylguanine-tRNA biosynthesis. Catalyzes the formation of N(7)-methylguanine at position 46 (m7G46) in tRNA. In Streptococcus suis (strain 05ZYH33), this protein is tRNA (guanine-N(7)-)-methyltransferase.